The chain runs to 41 residues: Photosystem II reaction center protein L (41 aa).

Residues 20-40 traverse the membrane as a helical segment; the sequence is SLYWGLLLIFVLAVPFSNYFF.

It belongs to the PsbL family. PSII is composed of 1 copy each of membrane proteins PsbA, PsbB, PsbC, PsbD, PsbE, PsbF, PsbH, PsbI, PsbJ, PsbK, PsbL, PsbM, PsbT, PsbX, PsbY, PsbZ, Psb30/Ycf12, at least 3 peripheral proteins of the oxygen-evolving complex and a large number of cofactors. It forms dimeric complexes.

The protein localises to the plastid. The protein resides in the chloroplast thylakoid membrane. Its function is as follows. One of the components of the core complex of photosystem II (PSII). PSII is a light-driven water:plastoquinone oxidoreductase that uses light energy to abstract electrons from H(2)O, generating O(2) and a proton gradient subsequently used for ATP formation. It consists of a core antenna complex that captures photons, and an electron transfer chain that converts photonic excitation into a charge separation. This subunit is found at the monomer-monomer interface and is required for correct PSII assembly and/or dimerization. The polypeptide is Photosystem II reaction center protein L (Pinus koraiensis (Korean pine)).